Consider the following 464-residue polypeptide: DNA primase DnaG (464 aa).

The Toprim domain occupies 198 to 272; that stretch reads DSIIVVEGRA…DVDYVARAPE (75 aa). Residues Glu-204, Asp-246, and Asp-248 each coordinate Mg(2+). The span at 315-333 shows a compositional bias: basic and acidic residues; the sequence is RESEGERQPRQVTKPEPEV. A disordered region spans residues 315 to 351; the sequence is RESEGERQPRQVTKPEPEVVKAQPKAETPEEKREPAT.

Belongs to the archaeal DnaG primase family. As to quaternary structure, forms a ternary complex with MCM helicase and DNA. Component of the archaeal exosome complex. The cofactor is Mg(2+).

It carries out the reaction ssDNA + n NTP = ssDNA/pppN(pN)n-1 hybrid + (n-1) diphosphate.. In terms of biological role, RNA polymerase that catalyzes the synthesis of short RNA molecules used as primers for DNA polymerase during DNA replication. Also part of the exosome, which is a complex involved in RNA degradation. Acts as a poly(A)-binding protein that enhances the interaction between heteromeric, adenine-rich transcripts and the exosome. The sequence is that of DNA primase DnaG from Thermococcus kodakarensis (strain ATCC BAA-918 / JCM 12380 / KOD1) (Pyrococcus kodakaraensis (strain KOD1)).